The sequence spans 158 residues: Snaclec agglucetin subunit alpha-2 (158 aa).

An N-terminal signal peptide occupies residues 1 to 23 (MGRFIFVSFGLLVVFLSLSGTGA). Intrachain disulfides connect Cys27/Cys38, Cys55/Cys152, and Cys127/Cys144. The C-type lectin domain occupies 34-153 (YDQYCYQVIK…CIQLNPFVCK (120 aa)).

Belongs to the snaclec family. Heterotetramer of the subunits alpha-1, alpha-2, beta-1 and beta-2; disulfide-linked. Expressed by the venom gland.

It localises to the secreted. Its function is as follows. Agglucetin specifically causes platelet aggregation and surface exposure of integrin alpha-IIb/beta-3 with a GPIb-(GP1BA-) dependent manner in washed platelets. It binds to human platelets in a saturable manner, and its binding is specifically blocked by anti-GP Ib mAb. It regulates endothelial cell survival and promotes angiogenesis by activating integrin alpha-v/beta-3 signaling through FAK/phosphatidylinositol 3-kinase (PI3K)/Akt pathway. This chain is Snaclec agglucetin subunit alpha-2, found in Deinagkistrodon acutus (Hundred-pace snake).